The sequence spans 277 residues: uncharacterized protein (277 aa).

The tract at residues 1 to 20 (MVTTSPPPTLTNSVQPHPTT) is disordered.

This is an uncharacterized protein from Acidianus convivator (ATV).